A 133-amino-acid polypeptide reads, in one-letter code: MATSDTIGDMLTRIRNANLARHPTTEVPATRMTRSIAQVLKNEGFINDFEEIGDGVKLNLVISLKYRGKQRQPTITALKRISKPGLRVYSNRRELPRVLGGIGIAIISTSSGIMTDRDARRSGVGGEVLCYVW.

Belongs to the universal ribosomal protein uS8 family. Part of the 30S ribosomal subunit. Contacts proteins S5 and S12.

Its function is as follows. One of the primary rRNA binding proteins, it binds directly to 16S rRNA central domain where it helps coordinate assembly of the platform of the 30S subunit. In Cyanothece sp. (strain PCC 7425 / ATCC 29141), this protein is Small ribosomal subunit protein uS8.